The chain runs to 219 residues: Germin-like protein subfamily 2 member 1 (219 aa).

A signal peptide spans 1 to 21 (MASPTLTLLLLLTTVSFFISS). Cys32 and Cys47 are disulfide-bonded. The Cupin type-1 domain occupies 61 to 209 (QGLAKPGLTN…AFQTSPGTVK (149 aa)). Asn70 carries N-linked (GlcNAc...) asparagine glycosylation. Mn(2+)-binding residues include His109, His111, Glu116, and His155.

Belongs to the germin family. As to quaternary structure, oligomer (believed to be a pentamer but probably hexamer).

It is found in the secreted. The protein localises to the extracellular space. Its subcellular location is the apoplast. Its function is as follows. May play a role in plant defense. Probably has no oxalate oxidase activity even if the active site is conserved. The polypeptide is Germin-like protein subfamily 2 member 1 (GLP4) (Arabidopsis thaliana (Mouse-ear cress)).